The primary structure comprises 120 residues: uncharacterized protein (120 aa).

The protein to M.jannaschii MJ0361.

This is an uncharacterized protein from Methanocaldococcus jannaschii (strain ATCC 43067 / DSM 2661 / JAL-1 / JCM 10045 / NBRC 100440) (Methanococcus jannaschii).